Here is a 103-residue protein sequence, read N- to C-terminus: uncharacterized protein (103 aa).

This is an uncharacterized protein from Sinorhizobium fredii (strain NBRC 101917 / NGR234).